The primary structure comprises 156 residues: Small ribosomal subunit protein uS7 (156 aa).

This sequence belongs to the universal ribosomal protein uS7 family. As to quaternary structure, part of the 30S ribosomal subunit. Contacts proteins S9 and S11.

Its function is as follows. One of the primary rRNA binding proteins, it binds directly to 16S rRNA where it nucleates assembly of the head domain of the 30S subunit. Is located at the subunit interface close to the decoding center, probably blocks exit of the E-site tRNA. This is Small ribosomal subunit protein uS7 from Mesorhizobium japonicum (strain LMG 29417 / CECT 9101 / MAFF 303099) (Mesorhizobium loti (strain MAFF 303099)).